The following is a 628-amino-acid chain: Chaperone protein DnaK (628 aa).

The residue at position 174 (Thr174) is a Phosphothreonine; by autocatalysis. Positions 589–628 (AAGGAGPDMGAGAGPDMGAGASNGSAPYGDDVVDGDYKEV) are disordered. Gly residues predominate over residues 591–605 (GGAGPDMGAGAGPDM).

This sequence belongs to the heat shock protein 70 family.

In terms of biological role, acts as a chaperone. This Lachnospira eligens (strain ATCC 27750 / DSM 3376 / VPI C15-48 / C15-B4) (Eubacterium eligens) protein is Chaperone protein DnaK.